Consider the following 544-residue polypeptide: Serine/threonine-protein kinase PAK 3 (544 aa).

The segment at 1–73 is disordered; it reads MSDSLDNEEK…EKERPEISLP (73 aa). 2 positions are modified to phosphoserine: Ser2 and Ser4. The span at 18–32 shows a compositional bias: polar residues; sequence MNSNNRDSSALNHSS. Ser50 is modified (phosphoserine; by autocatalysis). Residues 63-73 are compositionally biased toward basic and acidic residues; sequence KEKERPEISLP. Residues 65–108 form a GTPase-binding region; that stretch reads KERPEISLPSDFEHTIHVGFDAVTGEFTGIPEQWARLLQTSNIT. An autoregulatory region region spans residues 65-135; sequence KERPEISLPS…YDSKETVNNQ (71 aa). The CRIB domain maps to 70–83; the sequence is ISLPSDFEHTIHVG. Positions 84-267 are linker; sequence FDAVTGEFTG…IVSVGDPKKK (184 aa). Ser139 is subject to Phosphoserine; by autocatalysis. Disordered stretches follow at residues 156–197 and 213–248; these read SNTK…RPEH and PAAP…KMTD. Ser171 bears the Phosphoserine mark. Residues 171–186 show a composition bias toward acidic residues; sequence SEEEDEEEEEEEDDNE. Polar residues predominate over residues 224 to 235; it reads SAENANSSTLYR. One can recognise a Protein kinase domain in the interval 268 to 519; sequence YTRFEKIGQG…AKELLQHPFL (252 aa). Residues 274–282 and Lys297 each bind ATP; that span reads IGQGASGTV. Asp387 acts as the Proton acceptor in catalysis. A Phosphothreonine; by autocatalysis modification is found at Thr421.

Belongs to the protein kinase superfamily. STE Ser/Thr protein kinase family. STE20 subfamily. As to quaternary structure, interacts tightly with GTP-bound but not GDP-bound CDC42/p21 and RAC1. Shows highly specific binding to the SH3 domains of phospholipase C-gamma and of adapter protein NCK. Interacts with the C-terminal of APP. Interacts with ARHGEF6 and ARHGEF7. Interacts with GIT1 and GIT2. Requires Mg(2+) as cofactor. Post-translationally, autophosphorylated when activated by CDC42/p21. Neddylated. As to expression, detected at high levels in the brain and at low levels in the testis.

It localises to the cytoplasm. The enzyme catalyses L-seryl-[protein] + ATP = O-phospho-L-seryl-[protein] + ADP + H(+). It carries out the reaction L-threonyl-[protein] + ATP = O-phospho-L-threonyl-[protein] + ADP + H(+). With respect to regulation, activated by binding small G proteins. Binding of GTP-bound CDC42 or RAC1 to the autoregulatory region releases monomers from the autoinhibited dimer, enables phosphorylation of Thr-421 and allows the kinase domain to adopt an active structure. Serine/threonine protein kinase that plays a role in a variety of different signaling pathways including cytoskeleton regulation, cell migration, or cell cycle regulation. Plays a role in dendrite spine morphogenesis as well as synapse formation and plasticity. Acts as a downstream effector of the small GTPases CDC42 and RAC1. Activation by the binding of active CDC42 and RAC1 results in a conformational change and a subsequent autophosphorylation on several serine and/or threonine residues. Phosphorylates MAPK4 and MAPK6 and activates the downstream target MAPKAPK5, a regulator of F-actin polymerization and cell migration. Additionally, phosphorylates TNNI3/troponin I to modulate calcium sensitivity and relaxation kinetics of thin myofilaments. May also be involved in early neuronal development. In hippocampal neurons, necessary for the formation of dendritic spines and excitatory synapses; this function is dependent on kinase activity and may be exerted by the regulation of actomyosin contractility through the phosphorylation of myosin II regulatory light chain (MLC). The polypeptide is Serine/threonine-protein kinase PAK 3 (Pak3) (Rattus norvegicus (Rat)).